Consider the following 135-residue polypeptide: MAEKFDHLEEHLEKFVENIRQLGIIVSDFQPSSQAGLSQKLNFIVTGLQDIDKCRQQLHDITVPLEVFEYIDQGRNPQLYTKECLERALAKNEQVKGKIDTMKKFKSLLIQELSKVFPEDMAKYRSIRGEDHPPS.

Belongs to the Mediator complex subunit 10 family. In terms of assembly, component of the Mediator complex, which is composed of MED1, MED4, MED6, MED7, MED8, MED9, MED10, MED11, MED12, MED13, MED13L, MED14, MED15, MED16, MED17, MED18, MED19, MED20, MED21, MED22, MED23, MED24, MED25, MED26, MED27, MED29, MED30, MED31, CCNC, CDK8 and CDC2L6/CDK11. The MED12, MED13, CCNC and CDK8 subunits form a distinct module termed the CDK8 module. Mediator containing the CDK8 module is less active than Mediator lacking this module in supporting transcriptional activation. Individual preparations of the Mediator complex lacking one or more distinct subunits have been variously termed ARC, CRSP, DRIP, PC2, SMCC and TRAP.

Its subcellular location is the nucleus. Functionally, component of the Mediator complex, a coactivator involved in the regulated transcription of nearly all RNA polymerase II-dependent genes. Mediator functions as a bridge to convey information from gene-specific regulatory proteins to the basal RNA polymerase II transcription machinery. Mediator is recruited to promoters by direct interactions with regulatory proteins and serves as a scaffold for the assembly of a functional preinitiation complex with RNA polymerase II and the general transcription factors. The polypeptide is Mediator of RNA polymerase II transcription subunit 10 (Med10) (Mus musculus (Mouse)).